The chain runs to 319 residues: Ferrochelatase (319 aa).

Residues His192 and Glu271 each coordinate Fe cation.

Belongs to the ferrochelatase family.

It is found in the cytoplasm. The catalysed reaction is heme b + 2 H(+) = protoporphyrin IX + Fe(2+). It functions in the pathway porphyrin-containing compound metabolism; protoheme biosynthesis; protoheme from protoporphyrin-IX: step 1/1. Its function is as follows. Catalyzes the ferrous insertion into protoporphyrin IX. The protein is Ferrochelatase of Geotalea daltonii (strain DSM 22248 / JCM 15807 / FRC-32) (Geobacter daltonii).